The following is a 71-amino-acid chain: Translation initiation factor IF-1 (71 aa).

In terms of domain architecture, S1-like spans 1 to 71; that stretch reads MSKDDLIQFT…LTKGRVIHRH (71 aa).

The protein belongs to the IF-1 family. In terms of assembly, component of the 30S ribosomal translation pre-initiation complex which assembles on the 30S ribosome in the order IF-2 and IF-3, IF-1 and N-formylmethionyl-tRNA(fMet); mRNA recruitment can occur at any time during PIC assembly.

The protein localises to the cytoplasm. Functionally, one of the essential components for the initiation of protein synthesis. Stabilizes the binding of IF-2 and IF-3 on the 30S subunit to which N-formylmethionyl-tRNA(fMet) subsequently binds. Helps modulate mRNA selection, yielding the 30S pre-initiation complex (PIC). Upon addition of the 50S ribosomal subunit IF-1, IF-2 and IF-3 are released leaving the mature 70S translation initiation complex. The sequence is that of Translation initiation factor IF-1 from Rickettsia akari (strain Hartford).